A 679-amino-acid polypeptide reads, in one-letter code: Methionine--tRNA ligase (679 aa).

Positions 14-24 (PYANGSIHLGH) match the 'HIGH' region motif. Residues Cys145, Cys148, Cys158, and Cys161 each coordinate Zn(2+). A 'KMSKS' region motif is present at residues 331-335 (KMSKS). Lys334 lines the ATP pocket. In terms of domain architecture, tRNA-binding spans 577 to 679 (TFAAVDLRVA…SGAKPGQRIK (103 aa)).

This sequence belongs to the class-I aminoacyl-tRNA synthetase family. MetG type 1 subfamily. In terms of assembly, homodimer. Requires Zn(2+) as cofactor.

Its subcellular location is the cytoplasm. The catalysed reaction is tRNA(Met) + L-methionine + ATP = L-methionyl-tRNA(Met) + AMP + diphosphate. Is required not only for elongation of protein synthesis but also for the initiation of all mRNA translation through initiator tRNA(fMet) aminoacylation. The polypeptide is Methionine--tRNA ligase (Pseudomonas entomophila (strain L48)).